We begin with the raw amino-acid sequence, 211 residues long: FMN-dependent NADH:quinone oxidoreductase (211 aa).

FMN-binding positions include serine 10 and 16–18 (SVS).

It belongs to the azoreductase type 1 family. In terms of assembly, homodimer. It depends on FMN as a cofactor.

It carries out the reaction 2 a quinone + NADH + H(+) = 2 a 1,4-benzosemiquinone + NAD(+). The enzyme catalyses N,N-dimethyl-1,4-phenylenediamine + anthranilate + 2 NAD(+) = 2-(4-dimethylaminophenyl)diazenylbenzoate + 2 NADH + 2 H(+). Quinone reductase that provides resistance to thiol-specific stress caused by electrophilic quinones. Functionally, also exhibits azoreductase activity. Catalyzes the reductive cleavage of the azo bond in aromatic azo compounds to the corresponding amines. The polypeptide is FMN-dependent NADH:quinone oxidoreductase (Parafrankia sp. (strain EAN1pec)).